A 484-amino-acid polypeptide reads, in one-letter code: Glutamate--tRNA ligase (484 aa).

Residues 11–21 (PSPTGLLHIGN) carry the 'HIGH' region motif. A 'KMSKS' region motif is present at residues 255–259 (KLSKR). Residue lysine 258 participates in ATP binding.

The protein belongs to the class-I aminoacyl-tRNA synthetase family. Glutamate--tRNA ligase type 1 subfamily. As to quaternary structure, monomer.

It localises to the cytoplasm. It catalyses the reaction tRNA(Glu) + L-glutamate + ATP = L-glutamyl-tRNA(Glu) + AMP + diphosphate. Its function is as follows. Catalyzes the attachment of glutamate to tRNA(Glu) in a two-step reaction: glutamate is first activated by ATP to form Glu-AMP and then transferred to the acceptor end of tRNA(Glu). In Streptococcus agalactiae serotype III (strain NEM316), this protein is Glutamate--tRNA ligase.